A 1724-amino-acid polypeptide reads, in one-letter code: Protein scribble homolog (1724 aa).

The segment at 1–821 is sufficient for targeting to adherens junction; sequence MLKCIPLWRC…MTVLRERMVE (821 aa). 17 LRR repeats span residues 11–34, 35–58, 59–81, 83–105, 107–127, 128–150, 151–174, 176–196, 197–219, 221–242, 244–265, 266–288, 289–311, 312–334, 336–357, 359–380, and 382–405; these read NRHV…IYRY, NRSL…FFRL, HNLR…VANF, QLVE…KFCQ, LEIA…FTQL, RGLA…IGNL, SNLV…SFLV, LEQL…LGAL, PNLR…LGNL, QLVC…ISGL, ALTD…IGSL, KKLS…IGEC, ENLT…LGKL, KKLT…LGGC, SLNV…LANA, ELHV…LANL, and LKAM…DDEQ. Disordered stretches follow at residues 451-484, 496-620, and 646-683; these read RDDS…LKVM, YTAR…RKDT, and SHDG…HTPF. Low complexity predominate over residues 518-534; sequence SNQSHDSQASSSTTSAT. A compositionally biased stretch (acidic residues) spans 554–567; sequence VQEEEDLDEMEVEY. A compositionally biased stretch (basic and acidic residues) spans 574–583; it reads FAEEPIIRGG. The segment covering 584 to 598 has biased composition (acidic residues); sequence DEDDDYDNDDDDAER. The segment covering 611–620 has biased composition (basic and acidic residues); that stretch reads EKQRLIRKDT. Residues 661–678 are compositionally biased toward acidic residues; that stretch reads RDGEDDEEEEEDEDEEDD. 4 PDZ domains span residues 731–818, 867–955, 1005–1094, and 1101–1193; these read TLSI…LRER, ATCL…DREQ, EVTL…RRDP, and EIVI…CDGF. The disordered stretch occupies residues 955-995; that stretch reads QSSVGGASPRTRPHSPPPPEPSDSPEQEDGGDEHLGNHLNC. Disordered stretches follow at residues 1283-1407, 1414-1433, 1449-1468, and 1488-1555; these read LQKV…DRQK, KQQT…EDDL, REFM…AKQV, and SLGS…GESA. The segment covering 1295 to 1306 has biased composition (basic and acidic residues); sequence FRIDSPVRDAAH. Polar residues-rich tracts occupy residues 1308–1329, 1346–1357, and 1364–1385; these read PHNS…NAST, PASQDGHSSPNP, and PINS…KQPS. Positions 1395–1407 are enriched in basic and acidic residues; sequence HSPEQRSFKDRQK. Positions 1430–1461 form a coiled coil; the sequence is EDDLKKMKEEEAKRIEQRAREFMLDEDEEEEE. The segment covering 1453–1463 has biased composition (acidic residues); that stretch reads LDEDEEEEEED. The segment covering 1490-1506 has biased composition (polar residues); it reads GSPTSRQCATPPNYSAT. The segment covering 1507-1518 has biased composition (low complexity); sequence PPSHCGSSGPSS. Basic and acidic residues predominate over residues 1521 to 1538; it reads GKGDSQRNSVEDSFRLEQ. Serine 1609 carries the post-translational modification Phosphoserine. The tract at residues 1621–1684 is disordered; the sequence is IAKSKEGKKR…FMDESSSNAV (64 aa). The segment covering 1623–1632 has biased composition (basic and acidic residues); it reads KSKEGKKRGT.

Post-translationally, palmitoylated.

The protein localises to the cell membrane. It localises to the cell junction. The protein resides in the adherens junction. Its subcellular location is the cell projection. It is found in the lamellipodium. The protein localises to the cytoplasm. It localises to the postsynapse. The protein resides in the presynapse. Its function is as follows. Scaffold protein involved in different aspects of polarized cells differentiation regulating epithelial and neuronal morphogenesis. Regulates the caudal migration of the nVII motor neurons. Required for convergent extension movements during gastrulation. The protein is Protein scribble homolog (scrib) of Danio rerio (Zebrafish).